The primary structure comprises 380 residues: MNVKRKRVIVGMSGGVDSSVAALLLKKQGYDVIGIFMKYYNFECPWREDSIDAMLVSQSLKIPFYIIDITKNYKNLIIDYLYKEYKKGYTPNPDIICNSKIKFKFFLEKSIFLKSDFIATGHYVRKKEINENGKISYKIISGIDSNKDQSYFLCKLNKVQIKKSIFPLGWLNKKEVREIANKYNLINANKKDSQGICFIGKIKFLNFLKKKLAEKKGIIIEINKNSHIFKYKQKKLFSKKIEYKKEYGKIIGHHIGAHYFTKGQRKGLKIGGYKYPLFVIEKDITKNILYVGMGKNHPGLYTKVICIKKYNIHWINKKKIKTKIEVECRIRYRQNFKKATLYKKNNDLYVEFEIPQLAVNGGQFIVWYINNEVIGSGLIS.

ATP is bound by residues 11–18 (GMSGGVDS) and Met-37. The tract at residues 92-94 (NPD) is interaction with target base in tRNA. Residue Cys-97 is the Nucleophile of the active site. Cys-97 and Cys-197 are joined by a disulfide. Gly-121 contributes to the ATP binding site. Positions 147–149 (KDQ) are interaction with tRNA. Cys-197 (cysteine persulfide intermediate) is an active-site residue. The tract at residues 331 to 332 (RY) is interaction with tRNA.

It belongs to the MnmA/TRMU family.

Its subcellular location is the cytoplasm. The catalysed reaction is S-sulfanyl-L-cysteinyl-[protein] + uridine(34) in tRNA + AH2 + ATP = 2-thiouridine(34) in tRNA + L-cysteinyl-[protein] + A + AMP + diphosphate + H(+). Its function is as follows. Catalyzes the 2-thiolation of uridine at the wobble position (U34) of tRNA, leading to the formation of s(2)U34. This is tRNA-specific 2-thiouridylase MnmA from Karelsulcia muelleri (strain GWSS) (Sulcia muelleri).